Consider the following 248-residue polypeptide: Protein maestro (248 aa).

Residues 1-23 are disordered; it reads MEQTRKIPNQPLPTPTSQSKKRR. An HEAT repeat occupies 128–163; it reads SFFIDITLQARTLLDDEDDSVRYSAFVLFGQLASFA.

As to expression, prominent expression seen in testis, brain, liver and heart. Weakly expressed in the kidney.

It is found in the nucleus. The protein resides in the nucleolus. The polypeptide is Protein maestro (Mro) (Mus musculus (Mouse)).